A 334-amino-acid polypeptide reads, in one-letter code: Beta-hexosaminidase (334 aa).

Residues aspartate 60, arginine 68, arginine 133, and 163-164 contribute to the substrate site; that span reads KH. Histidine 176 (proton donor/acceptor) is an active-site residue. The Nucleophile role is filled by aspartate 247.

This sequence belongs to the glycosyl hydrolase 3 family. NagZ subfamily.

Its subcellular location is the cytoplasm. The catalysed reaction is Hydrolysis of terminal non-reducing N-acetyl-D-hexosamine residues in N-acetyl-beta-D-hexosaminides.. Its pathway is cell wall biogenesis; peptidoglycan recycling. Functionally, plays a role in peptidoglycan recycling by cleaving the terminal beta-1,4-linked N-acetylglucosamine (GlcNAc) from peptide-linked peptidoglycan fragments, giving rise to free GlcNAc, anhydro-N-acetylmuramic acid and anhydro-N-acetylmuramic acid-linked peptides. The chain is Beta-hexosaminidase from Xanthomonas oryzae pv. oryzae (strain KACC10331 / KXO85).